The sequence spans 1581 residues: Ankyrin repeat domain-containing protein 26 (1581 aa).

Residues 1 to 22 form a disordered region; the sequence is MKKIFGFRSKGPSPLGPSARPR. Ser13 carries the post-translational modification Phosphoserine. 5 ANK repeats span residues 46 to 76, 80 to 109, 113 to 142, 146 to 175, and 179 to 208; these read KDMG…GVND, KDRT…EIDA, ESST…DPNV, SGNT…NIEA, and DDLT…SIHA. 4 disordered regions span residues 225–270, 299–343, 361–381, and 488–652; these read RLQR…FDNK, LDNG…PVEG, SASQ…WHKS, and VLNK…QTAA. Positions 229–250 are enriched in polar residues; it reads SENSNPVDNGSEDGSLTRSYNT. Ser239 and Ser260 each carry phosphoserine. Over residues 308 to 319 the composition is skewed to acidic residues; the sequence is SDSPSESEDAIE. Positions 327–337 are enriched in polar residues; the sequence is RVQTLSPSRQS. Basic and acidic residues predominate over residues 367 to 381; sequence PNHDNLTRADGWHKS. A compositionally biased stretch (polar residues) spans 491–504; that stretch reads KTETVGMTDAQTFK. Basic and acidic residues-rich tracts occupy residues 505–516, 524–538, and 585–601; these read SEPESVSREEQT, SQQK…KNNE, and KEAK…REPA. Ser511 is subject to Phosphoserine. Coiled coils occupy residues 715 to 845, 876 to 1345, 1396 to 1470, and 1521 to 1550; these read RSHC…NARM, HEKE…MVEH, RSQM…RSLL, and LTKM…FCRV.

Interacts with TRIO. Interacts with GPS2. Interacts with CCDC85B. Interacts with HMMR. As to expression, widely expressed. Expressed in the arcuate and ventromedial nuclei within the hypothalamus and in the ependyma and the circumventricular organs (at protein level).

The protein localises to the cytoplasm. Its subcellular location is the cytosol. In terms of biological role, acts as a regulator of adipogenesis. Involved in the regulation of the feeding behavior. In Mus musculus (Mouse), this protein is Ankyrin repeat domain-containing protein 26 (Ankrd26).